The following is a 59-amino-acid chain: Zinc finger protein HVO_2753 (59 aa).

Short sequence motifs (c(P)XCG motif) lie at residues 12 to 16 (CVSCG), 29 to 33 (CPDCG), 39 to 43 (CSKCR), and 51 to 55 (CPDCG). Cys-29 and Cys-32 together coordinate Zn(2+). Zn(2+)-binding residues include Cys-51 and Cys-54.

In terms of assembly, monomer in solution.

Functionally, zinc-binding protein that binds only one zinc ion. Is required for swarming and biofilm formation. In Haloferax volcanii (strain ATCC 29605 / DSM 3757 / JCM 8879 / NBRC 14742 / NCIMB 2012 / VKM B-1768 / DS2) (Halobacterium volcanii), this protein is Zinc finger protein HVO_2753.